Reading from the N-terminus, the 41-residue chain is Large ribosomal subunit protein bL36 (41 aa).

The protein belongs to the bacterial ribosomal protein bL36 family.

This is Large ribosomal subunit protein bL36 from Methylobacterium nodulans (strain LMG 21967 / CNCM I-2342 / ORS 2060).